A 35-amino-acid polypeptide reads, in one-letter code: Sperm protamine alpha isoform 2 (35 aa).

Residues 1 to 35 are disordered; it reads MPRRRRRASRPIRRRRRARRSTAVRRRRRVVRRRR. A phosphoserine mark is found at S9 and S21.

Phosphorylated in immature sperm. Dephosphorylated in mature sperm allowing a stronger interaction with DNA. As to expression, gonads.

It is found in the nucleus. It localises to the chromosome. Protamines substitute for histones in the chromatin of sperm during the haploid phase of spermatogenesis. They compact sperm DNA into a highly condensed, stable and inactive complex. In Scomber scombrus (Atlantic mackerel), this protein is Sperm protamine alpha isoform 2.